We begin with the raw amino-acid sequence, 22 residues long: Cysteine protease inhibitor 4 (22 aa).

It belongs to the protease inhibitor I3 (leguminous Kunitz-type inhibitor) family. In terms of tissue distribution, tubers.

The protein resides in the vacuole. In terms of biological role, inhibitor of papain (cysteine protease). Does not inhibit trypsin, chymotrypsin nor elastase (serine proteases). May protect the plant by inhibiting proteases of invading organisms. In Solanum tuberosum (Potato), this protein is Cysteine protease inhibitor 4.